The primary structure comprises 223 residues: Deoxyribose-phosphate aldolase (223 aa).

Residue Asp-89 is the Proton donor/acceptor of the active site. Lys-152 serves as the catalytic Schiff-base intermediate with acetaldehyde. Catalysis depends on Lys-181, which acts as the Proton donor/acceptor.

It belongs to the DeoC/FbaB aldolase family. DeoC type 1 subfamily.

Its subcellular location is the cytoplasm. It catalyses the reaction 2-deoxy-D-ribose 5-phosphate = D-glyceraldehyde 3-phosphate + acetaldehyde. It functions in the pathway carbohydrate degradation; 2-deoxy-D-ribose 1-phosphate degradation; D-glyceraldehyde 3-phosphate and acetaldehyde from 2-deoxy-alpha-D-ribose 1-phosphate: step 2/2. Functionally, catalyzes a reversible aldol reaction between acetaldehyde and D-glyceraldehyde 3-phosphate to generate 2-deoxy-D-ribose 5-phosphate. The chain is Deoxyribose-phosphate aldolase from Bacillus cereus (strain B4264).